A 117-amino-acid polypeptide reads, in one-letter code: Ribosome-binding factor A (117 aa).

This sequence belongs to the RbfA family. In terms of assembly, monomer. Binds 30S ribosomal subunits, but not 50S ribosomal subunits or 70S ribosomes.

It localises to the cytoplasm. Its function is as follows. One of several proteins that assist in the late maturation steps of the functional core of the 30S ribosomal subunit. Associates with free 30S ribosomal subunits (but not with 30S subunits that are part of 70S ribosomes or polysomes). Required for efficient processing of 16S rRNA. May interact with the 5'-terminal helix region of 16S rRNA. This chain is Ribosome-binding factor A, found in Streptococcus thermophilus (strain CNRZ 1066).